An 82-amino-acid chain; its full sequence is Large ribosomal subunit protein uL23 (82 aa).

The protein belongs to the universal ribosomal protein uL23 family. Part of the 50S ribosomal subunit. Contacts protein L29.

In terms of biological role, binds to 23S rRNA. One of the proteins that surrounds the polypeptide exit tunnel on the outside of the ribosome. This chain is Large ribosomal subunit protein uL23, found in Sulfolobus acidocaldarius (strain ATCC 33909 / DSM 639 / JCM 8929 / NBRC 15157 / NCIMB 11770).